We begin with the raw amino-acid sequence, 192 residues long: Leucine-rich repeat-containing protein 51 (192 aa).

LRR repeat units lie at residues 50 to 71 (MTQS…NHAV), 80 to 101 (NLAW…LTTF), and 103 to 124 (NLSV…NKLA). The LRRCT domain maps to 137–175 (NPIEEEKGYRQYVLCTLPHITTFDFSGVTKADRTTAEVW).

Its subcellular location is the cytoplasm. The chain is Leucine-rich repeat-containing protein 51 from Bos taurus (Bovine).